A 403-amino-acid chain; its full sequence is Phosphopentomutase (403 aa).

Mn(2+) is bound by residues Asp-13, Asp-298, His-303, Asp-339, His-340, and His-351.

The protein belongs to the phosphopentomutase family. It depends on Mn(2+) as a cofactor.

Its subcellular location is the cytoplasm. The enzyme catalyses 2-deoxy-alpha-D-ribose 1-phosphate = 2-deoxy-D-ribose 5-phosphate. It carries out the reaction alpha-D-ribose 1-phosphate = D-ribose 5-phosphate. Its pathway is carbohydrate degradation; 2-deoxy-D-ribose 1-phosphate degradation; D-glyceraldehyde 3-phosphate and acetaldehyde from 2-deoxy-alpha-D-ribose 1-phosphate: step 1/2. In terms of biological role, isomerase that catalyzes the conversion of deoxy-ribose 1-phosphate (dRib-1-P) and ribose 1-phosphate (Rib-1-P) to deoxy-ribose 5-phosphate (dRib-5-P) and ribose 5-phosphate (Rib-5-P), respectively. In Streptococcus pneumoniae (strain JJA), this protein is Phosphopentomutase.